Consider the following 142-residue polypeptide: Galactose-6-phosphate isomerase subunit LacA (142 aa).

It belongs to the LacAB/RpiB family. As to quaternary structure, heteromultimeric protein consisting of LacA and LacB.

The catalysed reaction is aldehydo-D-galactose 6-phosphate = keto-D-tagatose 6-phosphate. The protein operates within carbohydrate metabolism; D-galactose 6-phosphate degradation; D-tagatose 6-phosphate from D-galactose 6-phosphate: step 1/1. The sequence is that of Galactose-6-phosphate isomerase subunit LacA from Clostridium acetobutylicum (strain ATCC 824 / DSM 792 / JCM 1419 / IAM 19013 / LMG 5710 / NBRC 13948 / NRRL B-527 / VKM B-1787 / 2291 / W).